The primary structure comprises 446 residues: Protein odr-4 homolog (446 aa).

Residues 76–96 (ASQVGRMLPGGLMVLGVFLMT) traverse the membrane as a helical segment. The span at 394 to 415 (HPEKRESEPASQHLESKPENKA) shows a compositional bias: basic and acidic residues. The tract at residues 394-417 (HPEKRESEPASQHLESKPENKARS) is disordered. The chain crosses the membrane as a helical span at residues 426 to 446 (GLVISTIVASIAIIISFYYIM).

The protein belongs to the ODR-4 family.

Its subcellular location is the membrane. In terms of biological role, may play a role in the trafficking of a subset of G-protein coupled receptors. The chain is Protein odr-4 homolog (odr4) from Xenopus laevis (African clawed frog).